The following is a 262-amino-acid chain: Insulin-like growth factor-binding protein 1 (262 aa).

The first 25 residues, 1-25 (MPEVPAVRAWPLLLSLALQLGAAAG), serve as a signal peptide directing secretion. Residues 28-108 (QPLHCAPCSA…TRGQGACMPA (81 aa)) enclose the IGFBP N-terminal domain. Cystine bridges form between cysteine 32/cysteine 59, cysteine 35/cysteine 61, cysteine 43/cysteine 62, cysteine 50/cysteine 65, cysteine 72/cysteine 85, and cysteine 79/cysteine 105. A disordered region spans residues 101–133 (GQGACMPAPSAEATETKDPAAPETTSPESTEMT). The segment covering 121 to 131 (APETTSPESTE) has biased composition (low complexity). Residues serine 126, serine 129, and serine 147 each carry the phosphoserine modification. Tyrosine 161 bears the Phosphotyrosine mark. Residues 176–254 (KEPCQRELYK…STAVRGDPKC (79 aa)) enclose the Thyroglobulin type-1 domain. Disulfide bonds link cysteine 179/cysteine 209, cysteine 220/cysteine 231, and cysteine 233/cysteine 254. Serine 245 carries the phosphoserine modification. Positions 249 to 251 (RGD) match the Cell attachment site motif.

In terms of assembly, binds equally well IGF1 and IGF2. Interacts with integrin ITGA5:ITGB1. Interacts with VHL; this interaction inhibits HIF1A degradation.

Its subcellular location is the secreted. Multifunctional protein that plays a critical role in regulating the availability of IGFs such as IGF1 and IGF2 to their receptors and thereby regulates IGF-mediated cellular processes including cell migration, proliferation, differentiation or apoptosis in a cell-type specific manner. Also plays a positive role in cell migration by interacting with integrin ITGA5:ITGB1 through its RGD motif. Mechanistically, binding to integrins leads to activation of focal adhesion kinase/PTK2 and stimulation of the mitogen-activated protein kinase (MAPK) pathway. Regulates cardiomyocyte apoptosis by suppressing HIF-1alpha/HIF1A degradation through ubiquitination. This chain is Insulin-like growth factor-binding protein 1 (IGFBP1), found in Sus scrofa (Pig).